The primary structure comprises 56 residues: UPF0391 membrane protein Rru_A0119 (56 aa).

The next 2 membrane-spanning stretches (helical) occupy residues 4-24 and 30-50; these read WALIFLVVAVVAALFGFGGIA and IAQILFFVFLVLLVISLIMHF.

The protein belongs to the UPF0391 family.

It localises to the cell membrane. This is UPF0391 membrane protein Rru_A0119 from Rhodospirillum rubrum (strain ATCC 11170 / ATH 1.1.1 / DSM 467 / LMG 4362 / NCIMB 8255 / S1).